The sequence spans 224 residues: UPF0758 protein Mmwyl1_0624 (224 aa).

An MPN domain is found at 102-224 (VFASAEHVRT…PVSLAERGLV (123 aa)). Residues H173, H175, and D186 each coordinate Zn(2+). The JAMM motif signature appears at 173-186 (HNHPSGIAEPSQAD).

It belongs to the UPF0758 family.

This is UPF0758 protein Mmwyl1_0624 from Marinomonas sp. (strain MWYL1).